Here is a 267-residue protein sequence, read N- to C-terminus: Small ribosomal subunit protein uS2 (267 aa).

The interval 232–267 (ATVREEEFADAPAEDAKPARRAPAKKAAADKGEAQA) is disordered. Positions 258–267 (AAADKGEAQA) are enriched in basic and acidic residues.

The protein belongs to the universal ribosomal protein uS2 family.

This chain is Small ribosomal subunit protein uS2, found in Stenotrophomonas maltophilia (strain R551-3).